The chain runs to 482 residues: ATP synthase subunit beta (482 aa).

An ATP-binding site is contributed by 162–169 (GGAGVGKT).

It belongs to the ATPase alpha/beta chains family. In terms of assembly, F-type ATPases have 2 components, CF(1) - the catalytic core - and CF(0) - the membrane proton channel. CF(1) has five subunits: alpha(3), beta(3), gamma(1), delta(1), epsilon(1). CF(0) has four main subunits: a(1), b(1), b'(1) and c(9-12).

It localises to the cellular thylakoid membrane. It carries out the reaction ATP + H2O + 4 H(+)(in) = ADP + phosphate + 5 H(+)(out). Produces ATP from ADP in the presence of a proton gradient across the membrane. The catalytic sites are hosted primarily by the beta subunits. The polypeptide is ATP synthase subunit beta (Trichormus variabilis (strain ATCC 29413 / PCC 7937) (Anabaena variabilis)).